We begin with the raw amino-acid sequence, 289 residues long: Dehydrodolichyl diphosphate synthase 4 (289 aa).

A helical membrane pass occupies residues 2–22 (LSMLWFLLSLLSLLLLPCLRP).

It belongs to the UPP synthase family. Mg(2+) serves as cofactor.

The protein resides in the endoplasmic reticulum membrane. Its pathway is protein modification; protein glycosylation. Functionally, catalyzes cis-prenyl chain elongation to produce the polyprenyl backbone of dolichol, a glycosyl carrier-lipid required for the biosynthesis of several classes of glycoprotein. This chain is Dehydrodolichyl diphosphate synthase 4, found in Arabidopsis thaliana (Mouse-ear cress).